We begin with the raw amino-acid sequence, 485 residues long: Glutamyl-tRNA(Gln) amidotransferase subunit A (485 aa).

Residues K78 and S153 each act as charge relay system in the active site. Residue S177 is the Acyl-ester intermediate of the active site.

Belongs to the amidase family. GatA subfamily. Heterotrimer of A, B and C subunits.

The catalysed reaction is L-glutamyl-tRNA(Gln) + L-glutamine + ATP + H2O = L-glutaminyl-tRNA(Gln) + L-glutamate + ADP + phosphate + H(+). Functionally, allows the formation of correctly charged Gln-tRNA(Gln) through the transamidation of misacylated Glu-tRNA(Gln) in organisms which lack glutaminyl-tRNA synthetase. The reaction takes place in the presence of glutamine and ATP through an activated gamma-phospho-Glu-tRNA(Gln). The protein is Glutamyl-tRNA(Gln) amidotransferase subunit A of Geobacter metallireducens (strain ATCC 53774 / DSM 7210 / GS-15).